A 279-amino-acid chain; its full sequence is Putative cysteine-rich repeat secretory protein 22 (279 aa).

An N-terminal signal peptide occupies residues 1-31 (MSSSSASKLLGSVLVFAMISVQIVFIHCVMS). 2 consecutive Gnk2-homologous domains span residues 44-146 (YLHH…PINS) and 152-276 (YEYN…LYRF).

Belongs to the cysteine-rich repeat secretory protein family.

Its subcellular location is the secreted. This chain is Putative cysteine-rich repeat secretory protein 22 (CRRSP22), found in Arabidopsis thaliana (Mouse-ear cress).